A 337-amino-acid polypeptide reads, in one-letter code: MKRFFAILGAALFVGNSGAFAEQATLIDFSKLVGEGNTGLHAPTTIDYSRQAGSAYSAEDKAAMKISLAIPSWEIELASSSQTVENQTLSLVTAAPVKQDAARYGGETVMGVRIHFPSFGINSFAVIKPPFTIPAYATLGDATAQNAVAGGQFDGFGVLKNVGVIKSIQINILGRNYLNRLSLLLEDQNGDEREIVMGYLNFDGWKSLQWNNPNYQTEVRNRDLQIVPLYPRSAPLIKLKGIKIHRDGSQEGGDIVSYIKDIKVIYDQAVVDRNSDVDDEAIWGILRQREEQYRNFELAKLGNLQVLRSLEKKKMAKEADFDQAAPAAAAARAPATN.

The first 21 residues, 1-21 (MKRFFAILGAALFVGNSGAFA), serve as a signal peptide directing secretion.

In terms of assembly, the flagellum consists of an outer layer composed of repeating units of FlaA around a core that contains one or all of five antigenically related polypeptides.

The protein localises to the periplasmic flagellum. Its subcellular location is the periplasm. Its function is as follows. Component of the outer layer of the flagella. The polypeptide is Flagellar filament outer layer protein (flaA) (Spirochaeta aurantia).